A 565-amino-acid polypeptide reads, in one-letter code: Laccase-12 (565 aa).

An N-terminal signal peptide occupies residues 1-24 (MTTVHTFSILLFFCSLFSASLIIA). 2 consecutive Plastocyanin-like domains span residues 32–148 (VIQE…PTPG) and 158–310 (RQTA…YKKT). An N-linked (GlcNAc...) asparagine glycan is attached at asparagine 78. Cu cation is bound by residues histidine 82, histidine 84, histidine 127, and histidine 129. N-linked (GlcNAc...) asparagine glycans are attached at residues asparagine 187, asparagine 203, asparagine 298, asparagine 325, asparagine 377, asparagine 387, asparagine 395, and asparagine 428. A Plastocyanin-like 3 domain is found at 413–549 (DFPSKPPVKF…AMAFLVDNGV (137 aa)). Histidine 466, histidine 469, histidine 471, histidine 528, cysteine 529, histidine 530, and histidine 534 together coordinate Cu cation.

It belongs to the multicopper oxidase family. Requires Cu cation as cofactor. In terms of tissue distribution, predominantly expressed in the inflorescence stem.

The protein resides in the secreted. The protein localises to the extracellular space. It is found in the apoplast. It carries out the reaction 4 hydroquinone + O2 = 4 benzosemiquinone + 2 H2O. In terms of biological role, lignin degradation and detoxification of lignin-derived products. This Arabidopsis thaliana (Mouse-ear cress) protein is Laccase-12 (LAC12).